Here is a 344-residue protein sequence, read N- to C-terminus: Holliday junction branch migration complex subunit RuvB (344 aa).

A large ATPase domain (RuvB-L) region spans residues 1–182; sequence MRIELLNTPP…FGINSRFDYY (182 aa). ATP-binding positions include I21, R22, G63, K66, T67, T68, 129–131, R172, Y182, and R219; that span reads EDF. Residue T67 coordinates Mg(2+). The interval 183 to 253 is small ATPAse domain (RuvB-S); that stretch reads APELLEGIIR…IAMKTLDCLE (71 aa). Positions 256 to 344 are head domain (RuvB-H); the sequence is EEGLDDMDKK…ISLFDAQPTS (89 aa). Residues R311 and R316 each contribute to the DNA site.

Belongs to the RuvB family. In terms of assembly, homohexamer. Forms an RuvA(8)-RuvB(12)-Holliday junction (HJ) complex. HJ DNA is sandwiched between 2 RuvA tetramers; dsDNA enters through RuvA and exits via RuvB. An RuvB hexamer assembles on each DNA strand where it exits the tetramer. Each RuvB hexamer is contacted by two RuvA subunits (via domain III) on 2 adjacent RuvB subunits; this complex drives branch migration. In the full resolvosome a probable DNA-RuvA(4)-RuvB(12)-RuvC(2) complex forms which resolves the HJ.

Its subcellular location is the cytoplasm. The catalysed reaction is ATP + H2O = ADP + phosphate + H(+). In terms of biological role, the RuvA-RuvB-RuvC complex processes Holliday junction (HJ) DNA during genetic recombination and DNA repair, while the RuvA-RuvB complex plays an important role in the rescue of blocked DNA replication forks via replication fork reversal (RFR). RuvA specifically binds to HJ cruciform DNA, conferring on it an open structure. The RuvB hexamer acts as an ATP-dependent pump, pulling dsDNA into and through the RuvAB complex. RuvB forms 2 homohexamers on either side of HJ DNA bound by 1 or 2 RuvA tetramers; 4 subunits per hexamer contact DNA at a time. Coordinated motions by a converter formed by DNA-disengaged RuvB subunits stimulates ATP hydrolysis and nucleotide exchange. Immobilization of the converter enables RuvB to convert the ATP-contained energy into a lever motion, pulling 2 nucleotides of DNA out of the RuvA tetramer per ATP hydrolyzed, thus driving DNA branch migration. The RuvB motors rotate together with the DNA substrate, which together with the progressing nucleotide cycle form the mechanistic basis for DNA recombination by continuous HJ branch migration. Branch migration allows RuvC to scan DNA until it finds its consensus sequence, where it cleaves and resolves cruciform DNA. In Pelodictyon phaeoclathratiforme (strain DSM 5477 / BU-1), this protein is Holliday junction branch migration complex subunit RuvB.